Reading from the N-terminus, the 501-residue chain is Bifunctional purine biosynthesis protein PurH (501 aa).

The 144-residue stretch at 1 to 144 folds into the MGS-like domain; the sequence is MKKRALISVF…KNFQDVVVIS (144 aa).

It belongs to the PurH family.

It catalyses the reaction (6R)-10-formyltetrahydrofolate + 5-amino-1-(5-phospho-beta-D-ribosyl)imidazole-4-carboxamide = 5-formamido-1-(5-phospho-D-ribosyl)imidazole-4-carboxamide + (6S)-5,6,7,8-tetrahydrofolate. The enzyme catalyses IMP + H2O = 5-formamido-1-(5-phospho-D-ribosyl)imidazole-4-carboxamide. Its pathway is purine metabolism; IMP biosynthesis via de novo pathway; 5-formamido-1-(5-phospho-D-ribosyl)imidazole-4-carboxamide from 5-amino-1-(5-phospho-D-ribosyl)imidazole-4-carboxamide (10-formyl THF route): step 1/1. It functions in the pathway purine metabolism; IMP biosynthesis via de novo pathway; IMP from 5-formamido-1-(5-phospho-D-ribosyl)imidazole-4-carboxamide: step 1/1. This is Bifunctional purine biosynthesis protein PurH from Clostridium botulinum (strain Eklund 17B / Type B).